The primary structure comprises 522 residues: Lysine--tRNA ligase (522 aa).

Positions 44–52 (PSGLPHIGT) match the 'HIGH' region motif. Residues 290 to 294 (KISKS) carry the 'KMSKS' region motif. Residue Lys293 participates in ATP binding.

This sequence belongs to the class-I aminoacyl-tRNA synthetase family.

The protein localises to the cytoplasm. It carries out the reaction tRNA(Lys) + L-lysine + ATP = L-lysyl-tRNA(Lys) + AMP + diphosphate. This Rickettsia massiliae (strain Mtu5) protein is Lysine--tRNA ligase.